Reading from the N-terminus, the 673-residue chain is uncharacterized protein (673 aa).

Residues 1–95 (MLNGEKSALG…QSSAIADSIG (95 aa)) are disordered. Residues 13–40 (PSNSNSSSKLNAKSPNFIPSSSNIPRSS) are compositionally biased toward low complexity. Basic and acidic residues predominate over residues 42–60 (KTKEHSADRKPHRNSEKKT). The RING-type zinc-finger motif lies at 214 to 273 (CPFCLEEKPVAARMSRCGHVYCFSCLLRFVETPTAAEVKAAETSGTKIVKCGHRSCPICW). The tract at residues 649-673 (SAPSKNSKNKKKKKLVLLSTGAAHR) is disordered.

Its subcellular location is the cytoplasm. The protein resides in the nucleus. This is an uncharacterized protein from Schizosaccharomyces pombe (strain 972 / ATCC 24843) (Fission yeast).